The following is a 2357-amino-acid chain: Protein transport protein Sec16A (2357 aa).

Disordered stretches follow at residues M1–F25 and F57–R303. Composition is skewed to low complexity over residues S64–P76 and Q210–Q227. Polar residues predominate over residues H285 to R303. S296, S314, and S331 each carry phosphoserine. 7 disordered regions span residues N335–C359, A508–Q540, K553–F603, V758–V828, L924–Q987, V1006–D1038, and Q1059–P1151. Over residues S520–S536 the composition is skewed to low complexity. A phosphoserine mark is found at S559, S569, S587, S589, and S592. Phosphothreonine is present on T593. Residue S595 is modified to Phosphoserine. Composition is skewed to polar residues over residues S766 to P778 and L803 to N825. Residues V1006 to R1028 show a composition bias toward polar residues. Residues S1019–G1890 form a required for localization to endoplasmic reticulum exit sites region. S1069 is subject to Phosphoserine. Residues E1080–A1101 show a composition bias toward polar residues. Residues A1101–H1400 are interaction with MIA3. Residues S1102–Y1405 are required for endoplasmic reticulum localization. Over residues Q1118 to Q1131 the composition is skewed to low complexity. Positions Q1138–P1151 are enriched in pro residues. Phosphoserine is present on residues S1207, S1229, and S1305. The disordered stretch occupies residues Y1215–G1248. The span at P1216–P1233 shows a compositional bias: basic and acidic residues. The span at F1307–P1322 shows a compositional bias: basic and acidic residues. Residues F1307–Q1378 form a disordered region. T1325 is modified (phosphothreonine). Phosphoserine occurs at positions 1327, 1347, 1350, 1356, 1359, 1362, 1369, 1573, and 1601. Residues D1333–A1354 are compositionally biased toward basic and acidic residues. Positions S1356–H1375 are enriched in low complexity. Residues Q1434–G1890 are central conserved domain (CCD); mediates interaction with RNF183, LRRK2 and SEC13. Residue T1907 is modified to Phosphothreonine. Phosphoserine occurs at positions 1939, 1964, 2022, and 2042. Disordered regions lie at residues K2049 to F2110, V2141 to M2181, and N2226 to Y2328. T2054 carries the post-translational modification Phosphothreonine. Residues S2056, S2073, and S2083 each carry the phosphoserine modification. Residues E2087–E2106 are compositionally biased toward basic and acidic residues. The interval E2106–N2357 is required for interaction with SEC23A. Phosphoserine is present on residues S2271 and S2291. Low complexity-rich tracts occupy residues E2289–E2302 and A2310–A2324.

Belongs to the SEC16 family. SEC16A and SEC16B are each present in multiple copies in a heteromeric complex. Interacts with SEC23A. Interacts with RNF183 and RNF152. Interacts with LRRK2 (via ROC domain). Interacts with SEC13. Interacts with RAB10. Interacts with MIA3. Interacts with GORASP2 in response to ER stress. As to expression, ubiquitous. Expressed at higher levels in the pancreas.

Its subcellular location is the endoplasmic reticulum membrane. It is found in the golgi apparatus membrane. It localises to the cytoplasm. The protein localises to the perinuclear region. The protein resides in the cytosol. Its subcellular location is the microsome membrane. Functionally, acts as a molecular scaffold that plays a key role in the organization of the endoplasmic reticulum exit sites (ERES), also known as transitional endoplasmic reticulum (tER). SAR1A-GTP-dependent assembly of SEC16A on the ER membrane forms an organized scaffold defining an ERES. Required for secretory cargo traffic from the endoplasmic reticulum to the Golgi apparatus. Mediates the recruitment of MIA3/TANGO to ERES. Regulates both conventional (ER/Golgi-dependent) and GORASP2-mediated unconventional (ER/Golgi-independent) trafficking of CFTR to cell membrane. Positively regulates the protein stability of E3 ubiquitin-protein ligases RNF152 and RNF183 and the ER localization of RNF183. Acts as a RAB10 effector in the regulation of insulin-induced SLC2A4/GLUT4 glucose transporter-enriched vesicles delivery to the cell membrane in adipocytes. The protein is Protein transport protein Sec16A (SEC16A) of Homo sapiens (Human).